The following is a 152-amino-acid chain: Deoxyuridine 5'-triphosphate nucleotidohydrolase (152 aa).

Residues 71-73, N84, 88-90, and M98 each bind substrate; these read RSG and LID.

It belongs to the dUTPase family. The cofactor is Mg(2+).

The enzyme catalyses dUTP + H2O = dUMP + diphosphate + H(+). It functions in the pathway pyrimidine metabolism; dUMP biosynthesis; dUMP from dCTP (dUTP route): step 2/2. This enzyme is involved in nucleotide metabolism: it produces dUMP, the immediate precursor of thymidine nucleotides and it decreases the intracellular concentration of dUTP so that uracil cannot be incorporated into DNA. In Erwinia tasmaniensis (strain DSM 17950 / CFBP 7177 / CIP 109463 / NCPPB 4357 / Et1/99), this protein is Deoxyuridine 5'-triphosphate nucleotidohydrolase.